The sequence spans 365 residues: UDP-N-acetylglucosamine--N-acetylmuramyl-(pentapeptide) pyrophosphoryl-undecaprenol N-acetylglucosamine transferase (365 aa).

Residues 10-12, asparagine 124, arginine 161, serine 195, isoleucine 248, and glutamine 292 each bind UDP-N-acetyl-alpha-D-glucosamine; that span reads TAG.

Belongs to the glycosyltransferase 28 family. MurG subfamily.

The protein resides in the cell membrane. The enzyme catalyses di-trans,octa-cis-undecaprenyl diphospho-N-acetyl-alpha-D-muramoyl-L-alanyl-D-glutamyl-meso-2,6-diaminopimeloyl-D-alanyl-D-alanine + UDP-N-acetyl-alpha-D-glucosamine = di-trans,octa-cis-undecaprenyl diphospho-[N-acetyl-alpha-D-glucosaminyl-(1-&gt;4)]-N-acetyl-alpha-D-muramoyl-L-alanyl-D-glutamyl-meso-2,6-diaminopimeloyl-D-alanyl-D-alanine + UDP + H(+). Its pathway is cell wall biogenesis; peptidoglycan biosynthesis. In terms of biological role, cell wall formation. Catalyzes the transfer of a GlcNAc subunit on undecaprenyl-pyrophosphoryl-MurNAc-pentapeptide (lipid intermediate I) to form undecaprenyl-pyrophosphoryl-MurNAc-(pentapeptide)GlcNAc (lipid intermediate II). This Nocardioides sp. (strain ATCC BAA-499 / JS614) protein is UDP-N-acetylglucosamine--N-acetylmuramyl-(pentapeptide) pyrophosphoryl-undecaprenol N-acetylglucosamine transferase.